Consider the following 488-residue polypeptide: GTPase Der (488 aa).

EngA-type G domains are found at residues 3 to 166 (PVVA…AEAM) and 199 to 372 (IKLA…DSAT). Residues 9–16 (GRPNVGKS), 56–60 (DTGGI), 118–121 (NKID), 205–212 (GKPNVGKS), 252–256 (DTAGV), and 317–320 (NKWD) each bind GTP. In terms of domain architecture, KH-like spans 373 to 457 (RRVSTSMLTR…PIQLRFQEGD (85 aa)).

The protein belongs to the TRAFAC class TrmE-Era-EngA-EngB-Septin-like GTPase superfamily. EngA (Der) GTPase family. As to quaternary structure, associates with the 50S ribosomal subunit.

Its function is as follows. GTPase that plays an essential role in the late steps of ribosome biogenesis. This is GTPase Der from Shewanella sp. (strain MR-7).